The following is a 402-amino-acid chain: Homoserine O-acetyltransferase (402 aa).

Residues 1–17 (MDWQTTSADTAPSSFIT) show a composition bias toward polar residues. Positions 1 to 39 (MDWQTTSADTAPSSFITEEQDRSLFGKPPASGAWKESDP) are disordered. Positions 78-388 (NAVLVLHALT…HFGHDGFLIE (311 aa)) constitute an AB hydrolase-1 domain. The active-site Nucleophile is the serine 183. Residue arginine 255 coordinates substrate. Catalysis depends on residues aspartate 349 and histidine 382. Aspartate 383 contributes to the substrate binding site.

The protein belongs to the AB hydrolase superfamily. MetX family. In terms of assembly, homodimer.

Its subcellular location is the cytoplasm. It carries out the reaction L-homoserine + acetyl-CoA = O-acetyl-L-homoserine + CoA. The protein operates within amino-acid biosynthesis; L-methionine biosynthesis via de novo pathway; O-acetyl-L-homoserine from L-homoserine: step 1/1. In terms of biological role, transfers an acetyl group from acetyl-CoA to L-homoserine, forming acetyl-L-homoserine. This Leifsonia xyli subsp. xyli (strain CTCB07) protein is Homoserine O-acetyltransferase.